A 463-amino-acid chain; its full sequence is MEKPSREAFEGNNKLLIGIVLSVITFWLFAQSLVNVVPILEDSFNTDIGTVNIAVSITALFSGMFVVGAGGLADKYGRIKLTNIGIILNILGSLLIIISNIPLLLIIGRLIQGLSAACIMPATLSIIKSYYIGKDRQRALSYWSIGSWGGSGVCSFFGGAVATLLGWRWIFILSIIISLIALFLIKGTPETKSKSISLNKFDIKGLVLLVIMLLSLNILITKGSELGVSSLLFITLLAITIGSFSLFIVLEKRATNPLIDFKLFKNKAYTGATASNFLLNGVAGTLIVANTFVQRGLGYSSLQAGSLSITYLVMVLIMIRVGEKLLQTLGCKKPMLIGTGVLIVGECLISLTFLPEILYVICCIIGYLFFGLGLGIYATPSTDTAIANAPLEKVGVAAGIYKMASALGGAFGVALSGAVYAIVSNMTNIYTGAMIALWLNAGMGILSFVIILLLVPKQNDTQL.

A run of 14 helical transmembrane segments spans residues 17 to 37 (IGIV…VNVV), 53 to 73 (IAVS…GGLA), 86 to 106 (IILN…LLLI), 107 to 127 (IGRL…LSII), 142 to 162 (YWSI…GAVA), 165 to 185 (LGWR…LFLI), 201 to 221 (FDIK…ILIT), 230 to 250 (SLLF…FIVL), 273 to 293 (TASN…NTFV), 299 to 319 (YSSL…LIMI), 334 to 354 (PMLI…LTFL), 357 to 377 (ILYV…LGIY), 403 to 423 (MASA…YAIV), and 435 to 455 (IALW…LLLV).

This sequence belongs to the major facilitator superfamily. TCR/Tet family.

It is found in the cell membrane. Its function is as follows. Multidrug efflux pump that acts independently of NorA and is one of the factors that confers resistance against diverse quinolones and chemical compounds. The protein is Quinolone resistance protein NorB (norB) of Staphylococcus aureus (strain MSSA476).